The primary structure comprises 207 residues: Outer-membrane lipoprotein LolB (207 aa).

Residues 1-26 form the signal peptide; that stretch reads MSKLKIDTKRRFSLLIALVLIISLSS. The N-palmitoyl cysteine moiety is linked to residue Cys27. The S-diacylglycerol cysteine moiety is linked to residue Cys27.

It belongs to the LolB family. As to quaternary structure, monomer.

It is found in the cell outer membrane. Its function is as follows. Plays a critical role in the incorporation of lipoproteins in the outer membrane after they are released by the LolA protein. The protein is Outer-membrane lipoprotein LolB of Francisella tularensis subsp. tularensis (strain WY96-3418).